A 254-amino-acid chain; its full sequence is L-erythrulose-1-phosphate isomerase (254 aa).

His-97 (electrophile) is an active-site residue. Glu-170 functions as the Proton acceptor in the catalytic mechanism. Substrate-binding residues include Gly-176 and Ser-213.

Belongs to the triosephosphate isomerase family. In terms of assembly, homodimer.

It localises to the cytoplasm. It catalyses the reaction L-erythrulose 1-phosphate = D-erythrulose 4-phosphate. The protein operates within carbohydrate metabolism; erythritol degradation. Functionally, catalyzes the isomerization of D-erythrulose-4P to L-erythrulose-1P. This Mesorhizobium japonicum (strain LMG 29417 / CECT 9101 / MAFF 303099) (Mesorhizobium loti (strain MAFF 303099)) protein is L-erythrulose-1-phosphate isomerase.